Consider the following 209-residue polypeptide: Uracil phosphoribosyltransferase (209 aa).

5-phospho-alpha-D-ribose 1-diphosphate contacts are provided by residues arginine 79, arginine 104, and 131–139; that span reads DPMLATGGS. Residues isoleucine 194 and 199 to 201 each bind uracil; that span reads GDA. Aspartate 200 provides a ligand contact to 5-phospho-alpha-D-ribose 1-diphosphate.

Belongs to the UPRTase family. Mg(2+) is required as a cofactor.

The enzyme catalyses UMP + diphosphate = 5-phospho-alpha-D-ribose 1-diphosphate + uracil. The protein operates within pyrimidine metabolism; UMP biosynthesis via salvage pathway; UMP from uracil: step 1/1. With respect to regulation, allosterically activated by GTP. In terms of biological role, catalyzes the conversion of uracil and 5-phospho-alpha-D-ribose 1-diphosphate (PRPP) to UMP and diphosphate. In Francisella tularensis subsp. novicida (strain U112), this protein is Uracil phosphoribosyltransferase.